The chain runs to 248 residues: Adenosylcobinamide-GDP ribazoletransferase (248 aa).

The next 6 helical transmembrane spans lie at 34 to 54 (LVFAPVVGLLIGGILTILFYI), 58 to 78 (FFPPGVTGILLIAAYIMLTGG), 113 to 133 (AVLAVICVVILNYALLSSIPL), 139 to 159 (ALLLFPVAGRIGSLVGAGSTV), 185 to 205 (IIYFIVSLLVLNIKGLLLAAA), and 227 to 247 (DILGAVCELNQTFFLILFYLF).

This sequence belongs to the CobS family. Requires Mg(2+) as cofactor.

It localises to the cell membrane. The enzyme catalyses alpha-ribazole + adenosylcob(III)inamide-GDP = adenosylcob(III)alamin + GMP + H(+). It carries out the reaction alpha-ribazole 5'-phosphate + adenosylcob(III)inamide-GDP = adenosylcob(III)alamin 5'-phosphate + GMP + H(+). It functions in the pathway cofactor biosynthesis; adenosylcobalamin biosynthesis; adenosylcobalamin from cob(II)yrinate a,c-diamide: step 7/7. Its function is as follows. Joins adenosylcobinamide-GDP and alpha-ribazole to generate adenosylcobalamin (Ado-cobalamin). Also synthesizes adenosylcobalamin 5'-phosphate from adenosylcobinamide-GDP and alpha-ribazole 5'-phosphate. This is Adenosylcobinamide-GDP ribazoletransferase from Acetivibrio thermocellus (strain ATCC 27405 / DSM 1237 / JCM 9322 / NBRC 103400 / NCIMB 10682 / NRRL B-4536 / VPI 7372) (Clostridium thermocellum).